A 159-amino-acid chain; its full sequence is Antitoxin Xre (159 aa).

The protein belongs to the MbcA/ParS/Xre antitoxin family. In terms of assembly, homodimer. Forms a complex with cognate toxin Res; the 2 toxin molecules dimerize and each contacts an Xre homodimer. Most Res-Xre contacts are between the antitoxin molecule closest to the toxin.

Its function is as follows. Probable antitoxin component of a type II toxin-antitoxin (TA) system. In vivo probably neutralizes the toxic effect of cognate toxin Res. The protein is Antitoxin Xre of Pseudomonas putida (strain ATCC 47054 / DSM 6125 / CFBP 8728 / NCIMB 11950 / KT2440).